The following is a 208-amino-acid chain: FMN-dependent NADH:quinone oxidoreductase (208 aa).

FMN-binding positions include 17–19, 99–102, and 143–146; these read SNS, MWNL, and SRGG.

It belongs to the azoreductase type 1 family. Homodimer. The cofactor is FMN.

It catalyses the reaction 2 a quinone + NADH + H(+) = 2 a 1,4-benzosemiquinone + NAD(+). The enzyme catalyses N,N-dimethyl-1,4-phenylenediamine + anthranilate + 2 NAD(+) = 2-(4-dimethylaminophenyl)diazenylbenzoate + 2 NADH + 2 H(+). In terms of biological role, quinone reductase that provides resistance to thiol-specific stress caused by electrophilic quinones. Also exhibits azoreductase activity. Catalyzes the reductive cleavage of the azo bond in aromatic azo compounds to the corresponding amines. This is FMN-dependent NADH:quinone oxidoreductase from Staphylococcus aureus (strain MSSA476).